The primary structure comprises 211 residues: MKKIHLITLSLAGICQSAHLVQQLAYSGKCDSNAFSICLKSILEINPTSFIAIYGNHEKNLIIGLEILLSTLTFSSFSYSYIELIKYISNMMIIEKKLKKSRTAIYSLKNKISVISSEYYLNYNIKNLTRKLGELYLEIISSLGSRIVIKGIKDFLQDHQIQEKIRCLLFSGIRAIVLWKQYGGNQLQLIYFRYFIIKKAKKILYHLKDAT.

This sequence belongs to the HflD family.

The protein localises to the cytoplasm. It localises to the cell membrane. This chain is High frequency lysogenization protein HflD homolog, found in Buchnera aphidicola subsp. Acyrthosiphon pisum (strain 5A).